Here is an 821-residue protein sequence, read N- to C-terminus: Leucine--tRNA ligase (821 aa).

The 'HIGH' region motif lies at 42-52 (PYPSGKLHMGH). The short motif at 583-587 (KMSKS) is the 'KMSKS' region element. Lys586 provides a ligand contact to ATP.

The protein belongs to the class-I aminoacyl-tRNA synthetase family.

The protein resides in the cytoplasm. The enzyme catalyses tRNA(Leu) + L-leucine + ATP = L-leucyl-tRNA(Leu) + AMP + diphosphate. This Carboxydothermus hydrogenoformans (strain ATCC BAA-161 / DSM 6008 / Z-2901) protein is Leucine--tRNA ligase.